The sequence spans 502 residues: Xylan O-acetyltransferase 13 (502 aa).

Topologically, residues 1 to 53 (MWSALFSHLREVHKRSGVKEEKLIMKSPPAAGEAGCHKPQATATNKMTVLQSP) are cytoplasmic. Residues 54-76 (LGLRTILTSLVAFFIVVSSVSLL) traverse the membrane as a helical; Signal-anchor for type II membrane protein segment. Over 77 to 502 (FDRGQDAQAQ…EFLYAYIMHK (426 aa)) the chain is Lumenal. 4 cysteine pairs are disulfide-bonded: C152–C203, C174–C239, C183–C483, and C399–C479. N-linked (GlcNAc...) asparagine glycosylation is found at N153, N163, N189, and N209. The GDS motif signature appears at 226 to 228 (GDS). S228 functions as the Nucleophile in the catalytic mechanism. Residues N255, N267, N372, N401, and N442 are each glycosylated (N-linked (GlcNAc...) asparagine). Residue D478 is the Proton donor of the active site. Residues 478–481 (DCTH) carry the DXXH motif motif. H481 serves as the catalytic Proton acceptor.

Belongs to the PC-esterase family. TBL subfamily.

Its subcellular location is the golgi apparatus membrane. Functionally, xylan acetyltransferase required for 2-O- and 3-O-monoacetylation of xylosyl residues in xylan. Catalyzes the 2-O-acetylation of xylan, followed by nonenzymatic acetyl migration to the O-3 position, resulting in products that are monoacetylated at both O-2 and O-3 positions. This chain is Xylan O-acetyltransferase 13, found in Oryza sativa subsp. japonica (Rice).